Consider the following 405-residue polypeptide: Tryptophan synthase beta chain (405 aa).

Lys-95 carries the post-translational modification N6-(pyridoxal phosphate)lysine.

The protein belongs to the TrpB family. As to quaternary structure, tetramer of two alpha and two beta chains. Pyridoxal 5'-phosphate is required as a cofactor.

It catalyses the reaction (1S,2R)-1-C-(indol-3-yl)glycerol 3-phosphate + L-serine = D-glyceraldehyde 3-phosphate + L-tryptophan + H2O. Its pathway is amino-acid biosynthesis; L-tryptophan biosynthesis; L-tryptophan from chorismate: step 5/5. In terms of biological role, the beta subunit is responsible for the synthesis of L-tryptophan from indole and L-serine. This is Tryptophan synthase beta chain from Pseudomonas putida (strain W619).